Consider the following 76-residue polypeptide: Conotoxin VnMEKL-0111 (76 aa).

An N-terminal signal peptide occupies residues 1 to 18 (MKLTILFLVAAVLMSTQA). Positions 19–45 (LIQHDGEKSQKAKMKFLTARTLSAKTR) are excised as a propeptide. 3 disulfide bridges follow: Cys-49–Cys-65, Cys-56–Cys-70, and Cys-64–Cys-74.

This sequence belongs to the conotoxin O2 superfamily. Expressed by the venom duct.

The protein localises to the secreted. The polypeptide is Conotoxin VnMEKL-0111 (Conus ventricosus (Mediterranean cone)).